We begin with the raw amino-acid sequence, 462 residues long: Ubiquitin carboxyl-terminal hydrolase calypso (462 aa).

Residues 29-260 (GWLELESDPG…IRFNLMAVVP (232 aa)) enclose the UCH catalytic domain. Residue Cys-115 is the Nucleophile of the active site. His-197 acts as the Proton donor in catalysis. Residues 357–385 (NYDKFICTFLSMLAHQGVLGELVSQHLLP) enclose the ULD domain. The interval 387-462 (KKIANRLNRQ…KGRNKCRKRK (76 aa)) is positively charged C-terminal tail required for binding nucleosomes. The span at 413-447 (GTNAAGSKSQQQQQQTQQQPQQTQTAKNGKSPGKT) shows a compositional bias: low complexity. The interval 413–462 (GTNAAGSKSQQQQQQTQQQPQQTQTAKNGKSPGKTPGRRRKGRNKCRKRK) is disordered. The segment covering 448 to 462 (PGRRRKGRNKCRKRK) has biased composition (basic residues).

The protein belongs to the peptidase C12 family. BAP1 subfamily. As to quaternary structure, catalytic component of the polycomb repressive deubiquitinase (PR-DUB) complex, at least composed of caly/calypso, Asx and sba (MBD5/6 homolog). The PR-DUB complex associates with nucleosomes to mediate deubiquitination of histone H2AK118ub1 substrates; the association requires the positively charged C-terminal tail of caly, probably due to direct binding of DNA. Interacts (via ULD domain) with Asx (via DEUBAD domain); the interaction produces a stable heterodimer with a composite binding site for ubiquitin. Homodimerizes (via coiled-coil hinge-region between the UCH and ULD domains) to mediate assembly of 2 copies of the caly-Asx heterodimer into a bisymmetric tetramer; dimerization enhances PR-DUB association with nucleosomes.

The protein resides in the nucleus. It carries out the reaction Thiol-dependent hydrolysis of ester, thioester, amide, peptide and isopeptide bonds formed by the C-terminal Gly of ubiquitin (a 76-residue protein attached to proteins as an intracellular targeting signal).. Functionally, catalytic component of the polycomb repressive deubiquitinase (PR-DUB) complex, a complex that specifically mediates deubiquitination of histone H2A monoubiquitinated at 'Lys-119' (H2AK118ub1). Mediates bisymmetric organization of the PR-DUB complex and is involved in association with nucleosomes to mediate deubiquitination. Does not deubiquitinate monoubiquitinated histone H2B. Required to maintain the transcriptionally repressive state of homeotic genes throughout development. The PR-DUB complex has weak or no activity toward 'Lys-48'- and 'Lys-63'-linked polyubiquitin chains. Polycomb group (PcG) protein. The chain is Ubiquitin carboxyl-terminal hydrolase calypso from Drosophila grimshawi (Hawaiian fruit fly).